A 266-amino-acid chain; its full sequence is Ribonuclease 3 (266 aa).

In terms of domain architecture, RNase III spans Ile-34 to Gly-158. Glu-72 is a binding site for Mg(2+). Asp-76 is a catalytic residue. Mg(2+) contacts are provided by Asp-144 and Glu-147. The active site involves Glu-147. Residues Asn-185–Asn-254 enclose the DRBM domain.

The protein belongs to the ribonuclease III family. As to quaternary structure, homodimer. Mg(2+) serves as cofactor.

Its subcellular location is the cytoplasm. It catalyses the reaction Endonucleolytic cleavage to 5'-phosphomonoester.. Functionally, digests double-stranded RNA. Involved in the processing of primary rRNA transcript to yield the immediate precursors to the large and small rRNAs (23S and 16S). Processes some mRNAs, and tRNAs when they are encoded in the rRNA operon. Processes pre-crRNA and tracrRNA of type II CRISPR loci if present in the organism. This is Ribonuclease 3 from Rhodopirellula baltica (strain DSM 10527 / NCIMB 13988 / SH1).